Here is a 266-residue protein sequence, read N- to C-terminus: Gasdermin bGSDM (266 aa).

Residue C3 is the site of S-palmitoyl cysteine attachment. 4 beta stranded membrane-spanning segments follow: residues 69-85 (ISGQ…GLSI), 97-115 (KLGL…FEFQ), 163-180 (KFTI…ELTI), and 189-205 (GNVK…KICY).

It belongs to the bacterial gasdermin family. In terms of assembly, monomer. As to quaternary structure, forms large, homooligomeric ring-shaped pores when inserted in membranes. Post-translationally, palmitoylation helps stabilize the inactive state; may self palmitoylate. Palmitoylation plays a significant role in pore formation.

It is found in the cytoplasm. The protein resides in the cell inner membrane. With respect to regulation, the full-length protein before cleavage is inactive: intramolecular interactions between the N-terminal domain and the C-terminal region as well as the lipid modification, mediate autoinhibition. The pyroptosis-like-inducing activity is carried by the released N-terminal domain (Gasdermin bGSDM, N-terminus). Functionally, precursor of a pore-forming protein involved in defense against bacteriophages. Expression of bGSDM and the neighboring protease gene (Ga0182885_104520) is toxic in E.coli. Cleavage of this precursor by its dedicated protease releases the active moiety (gasdermin bGSDM, N-terminus) which inserts into membranes, forming pores and triggering cell death. Pore-forming protein that causes membrane permeabilization via a pyroptosis-like activity. Makes ring-like pores when released. This chain is Gasdermin bGSDM, found in Desulfuromonadales bacterium.